The primary structure comprises 116 residues: Protein TCL1B1 (116 aa).

It belongs to the TCL1 family.

The chain is Protein TCL1B1 (Tcl1b1) from Mus musculus (Mouse).